The following is a 420-amino-acid chain: Glucose-1-phosphate adenylyltransferase (420 aa).

Alpha-D-glucose 1-phosphate-binding positions include Tyr-97, Gly-162, 177-178 (EK), and Ser-188.

Belongs to the bacterial/plant glucose-1-phosphate adenylyltransferase family. In terms of assembly, homotetramer.

It carries out the reaction alpha-D-glucose 1-phosphate + ATP + H(+) = ADP-alpha-D-glucose + diphosphate. Its pathway is glycan biosynthesis; glycogen biosynthesis. In terms of biological role, involved in the biosynthesis of ADP-glucose, a building block required for the elongation reactions to produce glycogen. Catalyzes the reaction between ATP and alpha-D-glucose 1-phosphate (G1P) to produce pyrophosphate and ADP-Glc. The polypeptide is Glucose-1-phosphate adenylyltransferase (Pseudothermotoga lettingae (strain ATCC BAA-301 / DSM 14385 / NBRC 107922 / TMO) (Thermotoga lettingae)).